The sequence spans 262 residues: Zinc import ATP-binding protein ZnuC (262 aa).

Positions 5 to 220 (VSLEQLCVEF…PSYIALFGNA (216 aa)) constitute an ABC transporter domain. Residue 37-44 (GPNGAGKS) participates in ATP binding. The segment at 236–262 (HHDLSGSPVSGDATSCSNHNHGHHHHD) is disordered.

Belongs to the ABC transporter superfamily. Zinc importer (TC 3.A.1.15.5) family. As to quaternary structure, the complex is composed of two ATP-binding proteins (ZnuC), two transmembrane proteins (ZnuB) and a solute-binding protein (ZnuA).

The protein resides in the cell inner membrane. It catalyses the reaction Zn(2+)(out) + ATP(in) + H2O(in) = Zn(2+)(in) + ADP(in) + phosphate(in) + H(+)(in). Functionally, part of the ABC transporter complex ZnuABC involved in zinc import. Responsible for energy coupling to the transport system. The polypeptide is Zinc import ATP-binding protein ZnuC (Vibrio parahaemolyticus serotype O3:K6 (strain RIMD 2210633)).